We begin with the raw amino-acid sequence, 364 residues long: Spermidine/putrescine import ATP-binding protein PotA (364 aa).

Positions 5 to 235 (LSFKGVTKGF…PVNRFVADFI (231 aa)) constitute an ABC transporter domain. 37–44 (GPSGCGKT) serves as a coordination point for ATP.

This sequence belongs to the ABC transporter superfamily. Spermidine/putrescine importer (TC 3.A.1.11.1) family. In terms of assembly, the complex is composed of two ATP-binding proteins (PotA), two transmembrane proteins (PotB and PotC) and a solute-binding protein (PotD).

The protein localises to the cell membrane. The enzyme catalyses ATP + H2O + polyamine-[polyamine-binding protein]Side 1 = ADP + phosphate + polyamineSide 2 + [polyamine-binding protein]Side 1.. In terms of biological role, part of the ABC transporter complex PotABCD involved in spermidine/putrescine import. Responsible for energy coupling to the transport system. The chain is Spermidine/putrescine import ATP-binding protein PotA from Staphylococcus haemolyticus (strain JCSC1435).